Consider the following 201-residue polypeptide: Small ribosomal subunit protein uS4c (201 aa).

A disordered region spans residues 23-42 (SKKPRAGSNLRNQLRPGKKS). The 63-residue stretch at 89 to 151 (MRLDNILFRL…QKSKSLVQNY (63 aa)) folds into the S4 RNA-binding domain.

This sequence belongs to the universal ribosomal protein uS4 family. In terms of assembly, part of the 30S ribosomal subunit. Contacts protein S5. The interaction surface between S4 and S5 is involved in control of translational fidelity.

The protein resides in the plastid. It localises to the chloroplast. In terms of biological role, one of the primary rRNA binding proteins, it binds directly to 16S rRNA where it nucleates assembly of the body of the 30S subunit. Functionally, with S5 and S12 plays an important role in translational accuracy. The polypeptide is Small ribosomal subunit protein uS4c (rps4) (Morus indica (Mulberry)).